We begin with the raw amino-acid sequence, 140 residues long: Small ribosomal subunit protein uS12 (140 aa).

Positions 1 to 44 (MPTFNQLVRKGRKTMEKNSQAPALQKGFNSLRKKTTDASAPQKR) are disordered. Asp102 carries the post-translational modification 3-methylthioaspartic acid. The interval 120–140 (VAKRRQARSKYGAKRPKEAKK) is disordered. The span at 121–140 (AKRRQARSKYGAKRPKEAKK) shows a compositional bias: basic residues.

The protein belongs to the universal ribosomal protein uS12 family. In terms of assembly, part of the 30S ribosomal subunit. Contacts proteins S8 and S17. May interact with IF1 in the 30S initiation complex.

Its function is as follows. With S4 and S5 plays an important role in translational accuracy. In terms of biological role, interacts with and stabilizes bases of the 16S rRNA that are involved in tRNA selection in the A site and with the mRNA backbone. Located at the interface of the 30S and 50S subunits, it traverses the body of the 30S subunit contacting proteins on the other side and probably holding the rRNA structure together. The combined cluster of proteins S8, S12 and S17 appears to hold together the shoulder and platform of the 30S subunit. This is Small ribosomal subunit protein uS12 from Lachnoclostridium phytofermentans (strain ATCC 700394 / DSM 18823 / ISDg) (Clostridium phytofermentans).